Reading from the N-terminus, the 373-residue chain is Histidinol-phosphate aminotransferase (373 aa).

Lys229 is subject to N6-(pyridoxal phosphate)lysine.

It belongs to the class-II pyridoxal-phosphate-dependent aminotransferase family. Histidinol-phosphate aminotransferase subfamily. Pyridoxal 5'-phosphate is required as a cofactor.

The enzyme catalyses L-histidinol phosphate + 2-oxoglutarate = 3-(imidazol-4-yl)-2-oxopropyl phosphate + L-glutamate. It participates in amino-acid biosynthesis; L-histidine biosynthesis; L-histidine from 5-phospho-alpha-D-ribose 1-diphosphate: step 7/9. The protein is Histidinol-phosphate aminotransferase (hisC) of Methanothermobacter thermautotrophicus (strain ATCC 29096 / DSM 1053 / JCM 10044 / NBRC 100330 / Delta H) (Methanobacterium thermoautotrophicum).